Here is a 368-residue protein sequence, read N- to C-terminus: Propane 2-monooxygenase, hydroxylase component small subunit (368 aa).

The protein belongs to the TmoE/XamoE family. As to quaternary structure, the propane 2-monooxygenase multicomponent enzyme system is composed of an electron transfer component and a monooxygenase component interacting with the effector protein MimD. The electron transfer component is composed of a reductase (MimB), and the monooxygenase component is formed by a large subunit (MimA) and a small subunit (MimC). Requires the presence of the chaperonin-like protein MimG to ensure a productive folding, resulting of a soluble MimC, which leads to the active form of MimABCD.

It catalyses the reaction propane + NADH + O2 + H(+) = propan-2-ol + NAD(+) + H2O. It carries out the reaction acetone + NADH + O2 + H(+) = hydroxyacetone + NAD(+) + H2O. The catalysed reaction is butan-2-one + NADH + O2 + H(+) = 1-hydroxy-2-butanone + NAD(+) + H2O. The enzyme catalyses phenol + NADH + O2 + H(+) = hydroquinone + NAD(+) + H2O. In terms of biological role, component of the propane 2-monooxygenase multicomponent enzyme system which is involved in the degradation of propane via the O2-dependent hydroxylation of propane. Also involved in the degradation of acetone via the O2-dependent hydroxylation of acetone. Also able to catalyze the oxidation of phenol, methylethylketone (2-butanone), 1-propanol and 2-propanol. This chain is Propane 2-monooxygenase, hydroxylase component small subunit, found in Mycolicibacterium goodii (Mycobacterium goodii).